A 272-amino-acid chain; its full sequence is Magnetosome protein MamQ (272 aa).

Residues 1-46 are Cytoplasmic-facing; the sequence is MAVSDADASSVDKVESITLQRVKQSEELLAQLYVVEESPRRMGRGP. Residues 47 to 67 form a helical membrane-spanning segment; the sequence is VQLMLAISVLSLVAFITTLLM. Topologically, residues 68 to 272 are lumenal; it reads RYNAFVTMYE…PLTHSQESKN (205 aa).

This sequence belongs to the LemA family.

It localises to the magnetosome membrane. It is found in the cell inner membrane. Functionally, essential for magnetosome formation. Not essential for formation of magnetosome membrane vesicles. One of 7 genes (mamLQBIEMO) able to induce magnetosome membrane biogenesis; coexpression of mamLQRBIEMO in a deletion of the 17 gene mamAB operon restores magnetosome vesicle formation but not magnetite biosynthesis. This is Magnetosome protein MamQ from Magnetospirillum gryphiswaldense (strain DSM 6361 / JCM 21280 / NBRC 15271 / MSR-1).